Here is a 244-residue protein sequence, read N- to C-terminus: Geranylgeranylglyceryl phosphate synthase (244 aa).

The Mg(2+) site is built by aspartate 21 and threonine 50. Sn-glycerol 1-phosphate-binding positions include 168–174 (YLEAGSG), 200–201 (GG), and 222–223 (GN).

Belongs to the GGGP/HepGP synthase family. Group II subfamily. It depends on Mg(2+) as a cofactor.

Its subcellular location is the cytoplasm. The enzyme catalyses sn-glycerol 1-phosphate + (2E,6E,10E)-geranylgeranyl diphosphate = sn-3-O-(geranylgeranyl)glycerol 1-phosphate + diphosphate. The protein operates within membrane lipid metabolism; glycerophospholipid metabolism. Prenyltransferase that catalyzes the transfer of the geranylgeranyl moiety of geranylgeranyl diphosphate (GGPP) to the C3 hydroxyl of sn-glycerol-1-phosphate (G1P). This reaction is the first ether-bond-formation step in the biosynthesis of archaeal membrane lipids. This is Geranylgeranylglyceryl phosphate synthase from Sulfurisphaera tokodaii (strain DSM 16993 / JCM 10545 / NBRC 100140 / 7) (Sulfolobus tokodaii).